The following is a 344-amino-acid chain: Protein pelota homolog (344 aa).

This sequence belongs to the eukaryotic release factor 1 family. Pelota subfamily. As to quaternary structure, monomer. It depends on a divalent metal cation as a cofactor.

It is found in the cytoplasm. Functionally, may function in recognizing stalled ribosomes, interact with stem-loop structures in stalled mRNA molecules, and effect endonucleolytic cleavage of the mRNA. May play a role in the release non-functional ribosomes and degradation of damaged mRNAs. Has endoribonuclease activity. This Archaeoglobus fulgidus (strain ATCC 49558 / DSM 4304 / JCM 9628 / NBRC 100126 / VC-16) protein is Protein pelota homolog.